Reading from the N-terminus, the 211-residue chain is Flagellar calcium-binding protein (211 aa).

The segment at 1–29 (MGACGSKGSTSDKGLASDKDGKKAKDRKE) is disordered. Basic and acidic residues predominate over residues 15-29 (LASDKDGKKAKDRKE). EF-hand domains are found at residues 45-80 (EAKQ…VLKL), 81-116 (DEFT…FVEF), 127-162 (YDFF…LEAW), and 164-199 (AKVE…VKLD). Ca(2+) is bound by residues Asp-58, Asn-60, Thr-62, Lys-64, and Glu-69. The Ca(2+) site is built by Asp-140, Ser-142, Asn-144, Glu-151, Asp-177, Asn-179, Thr-181, Ser-183, and Glu-188.

It belongs to the calflagin family.

The protein resides in the cell projection. The protein localises to the cilium. Its subcellular location is the flagellum. Its function is as follows. May contribute to the rapid motility of the trypanosomes, playing a role either in flagellar structure or in calcium metabolism. Could alternate between a GDP-bound inactive form to a calcium/GTP-bound active form. The sequence is that of Flagellar calcium-binding protein (FCABP) from Trypanosoma cruzi.